Reading from the N-terminus, the 844-residue chain is Striatin-interacting proteins 2 (844 aa).

Low complexity predominate over residues 1 to 18 (MDDPAAPGPAGSPANDNG). Residues 1–58 (MDDPAAPGPAGSPANDNGNGNGNGNGNGNGGKGKPAVPKGRETFRNQRRESEGSVDCP) form a disordered region. Over residues 19–33 (NGNGNGNGNGNGGKG) the composition is skewed to gly residues. A compositionally biased stretch (basic and acidic residues) spans 39-52 (KGRETFRNQRRESE). 3 positions are modified to phosphoserine: Ser-328, Ser-339, and Ser-364. Positions 331–355 (SYTLDLGESQLAPPPSKLRGRRGSR) are disordered. The disordered stretch occupies residues 370–422 (ERDLFKTEEPATEEEEESAADGERTLDGELDLLEQDPLVPPPPSQTPLSTDRV). Positions 379-389 (PATEEEEESAA) are enriched in acidic residues.

It belongs to the STRIP family. As to quaternary structure, part of the core of STRIPAK complexes composed of PP2A catalytic and scaffolding subunits, the striatins (PP2A regulatory subunits), the striatin-associated proteins MOB4, STRIP1 and STRIP2, PDCD10 and members of the STE20 kinases, such as STK24 and STK26. Interacts with CTTNBP2NL.

It is found in the cytoplasm. In terms of biological role, plays a role in the regulation of cell morphology and cytoskeletal organization. Required in the control of cell shape. Calmodulin-binding scaffolding protein which is the center of the striatin-interacting phosphatase and kinase (STRIPAK) complexes. STRIPAK complexes have critical roles in protein (de)phosphorylation and are regulators of multiple signaling pathways including Hippo, MAPK, nuclear receptor and cytoskeleton remodeling. Different types of STRIPAK complexes are involved in a variety of biological processes such as cell growth, differentiation, apoptosis, metabolism and immune regulation. This Mus musculus (Mouse) protein is Striatin-interacting proteins 2 (Strip2).